Consider the following 178-residue polypeptide: MSRIGYKTVNVPAGVEVKRDGDQVTVKGPKGELTRTFSSVISMKISDGAVDFDRPDNNNKTRALHGTQRANLNNMVEGVVSGFAKTLKLVGVGYRVQAKGKTLILSVGYSNPVEMAIPETLEVKVPDNTTINISGISKQEVGDFAAEVRAVRSPEPYKGKGIRYENEYVRIREGKTGK.

This sequence belongs to the universal ribosomal protein uL6 family. As to quaternary structure, part of the 50S ribosomal subunit.

Its function is as follows. This protein binds to the 23S rRNA, and is important in its secondary structure. It is located near the subunit interface in the base of the L7/L12 stalk, and near the tRNA binding site of the peptidyltransferase center. The protein is Large ribosomal subunit protein uL6 of Levilactobacillus brevis (strain ATCC 367 / BCRC 12310 / CIP 105137 / JCM 1170 / LMG 11437 / NCIMB 947 / NCTC 947) (Lactobacillus brevis).